The primary structure comprises 302 residues: Snake venom metalloprotease inhibitor 02A10 (302 aa).

An N-terminal signal peptide occupies residues 1 to 23 (MSVSRLAASGLLLVSLLALALDG). A propeptide spanning residues 24-47 (KPVEKWSPWLWPPRPRPPIPPLQQ) is cleaved from the precursor. Positions 32–302 (WLWPPRPRPP…CPKLPPSGGH (271 aa)) are disordered. Residues 33 to 44 (LWPPRPRPPIPP) are compositionally biased toward pro residues. Q48 is subject to Pyrrolidone carboxylic acid. The propeptide occupies 51–58 (LDPPIPQQ). At Q59 the chain carries Pyrrolidone carboxylic acid. Positions 62–69 (LDPPIPQQ) are excised as a propeptide. Residue Q70 is modified to Pyrrolidone carboxylic acid. A propeptide spanning residues 73-80 (LDPPIPQQ) is cleaved from the precursor. Pyrrolidone carboxylic acid is present on Q81. The propeptide occupies 84–91 (LNPPIPQQ). Pyrrolidone carboxylic acid is present on Q92. The propeptide occupies 95 to 102 (LDPPIPQQ). The residue at position 103 (Q103) is a Pyrrolidone carboxylic acid. The propeptide occupies 106–113 (LNPPIPQQ). At Q114 the chain carries Pyrrolidone carboxylic acid. Positions 117–124 (LNPPIPQQ) are excised as a propeptide. Q125 bears the Pyrrolidone carboxylic acid mark. Residues 128–135 (LNPPIPQQ) constitute a propeptide that is removed on maturation. Position 136 is a pyrrolidone carboxylic acid (Q136). Positions 139-146 (LNPPIPQQ) are excised as a propeptide. At Q147 the chain carries Pyrrolidone carboxylic acid. Residues 150-157 (LDPPIPQQ) constitute a propeptide that is removed on maturation. The residue at position 158 (Q158) is a Pyrrolidone carboxylic acid. Positions 161–168 (LDPPIPQQ) are excised as a propeptide. Q169 carries the post-translational modification Pyrrolidone carboxylic acid. Residues 172–179 (LDPPIPQQ) constitute a propeptide that is removed on maturation. Q180 carries the post-translational modification Pyrrolidone carboxylic acid. Residues 183-190 (LNPPIPQQ) constitute a propeptide that is removed on maturation. Q191 bears the Pyrrolidone carboxylic acid mark. Positions 194–201 (LDPPIPQQ) are excised as a propeptide. Q202 carries the post-translational modification Pyrrolidone carboxylic acid. A propeptide spanning residues 205–212 (LDPPIPQQ) is cleaved from the precursor. A Pyrrolidone carboxylic acid modification is found at Q213. A propeptide spanning residues 216-223 (LNPPIPQQ) is cleaved from the precursor. At Q224 the chain carries Pyrrolidone carboxylic acid. Positions 227 to 273 (QRPLQPEVPSLMELHQERQKQGRMMHHDEDPGDAAEGPRRQKKEPGK) are excised as a propeptide. Basic and acidic residues-rich tracts occupy residues 240–255 (LHQE…HHDE) and 262–273 (EGPRRQKKEPGK). Cysteines 279 and 293 form a disulfide. Residues 294-302 (PKLPPSGGH) constitute a propeptide that is removed on maturation.

This sequence in the C-terminal section; belongs to the natriuretic peptide family. In terms of tissue distribution, expressed by the venom gland.

The protein localises to the secreted. Functionally, pEKW peptides may serve as metalloproteinase inhibitors during glandular storage. Their inhibition may be instantly disengaged, by dilution or physiochemical change, when venom is injected into tissue of the victim. Its function is as follows. Exhibits hypotensive and vasodepressor activity. Acts by activating natriuretic receptors (NPR1 and/or NPR2 and/or NPR3). The sequence is that of Snake venom metalloprotease inhibitor 02A10 (Svmpi-Cce12) from Cerastes cerastes (Horned desert viper).